Consider the following 1030-residue polypeptide: ADAMTS-like protein 4 (1030 aa).

Positions 1–24 (MELWLGRLWLYVMLLLLLLQLCQD) are cleaved as a signal peptide. A TSP type-1 1 domain is found at 47-91 (GPWGRWASCSQPCGVGVQRRSRTCELHPALSLPPRPPRHPEAPQP). 2 disordered regions span residues 73-150 (HPAL…KPGM) and 168-306 (LAHK…LPLT). Polar residues-rich tracts occupy residues 176–186 (KDSSTAEETLP), 211–237 (QSRS…SSAP), and 245–257 (PTSS…SFQG). N-linked (GlcNAc...) asparagine glycans are attached at residues N451 and N731. 5 consecutive TSP type-1 domains span residues 681–740 (CPPY…QLRL), 741–800 (CGHW…GPCT), 803–865 (WFYS…GPCE), 866–925 (KTWR…QGQA), and 926–982 (CEDQ…QPCN). In terms of domain architecture, PLAC spans 985 to 1022 (PDDQCKDSSPHCPLVVQARLCVYPYYTATCCRSCAHVL).

Interacts with CTSB. Interacts with FBN1. In terms of processing, glycosylated. Can be O-fucosylated by POFUT2 on a serine or a threonine residue found within the consensus sequence C1-X(2)-(S/T)-C2-G of the TSP type-1 repeat domains where C1 and C2 are the first and second cysteine residue of the repeat, respectively. Fucosylated repeats can then be further glycosylated by the addition of a beta-1,3-glucose residue by the glucosyltransferase, B3GALTL. Fucosylation mediates the efficient secretion of ADAMTS family members. Can also be C-glycosylated with one or two mannose molecules on tryptophan residues within the consensus sequence W-X-X-W of the TPRs, and N-glycosylated. These other glycosylations can also facilitate secretion.

Its subcellular location is the secreted. It is found in the extracellular space. The protein resides in the extracellular matrix. Functionally, positive regulation of apoptosis. May facilitate FBN1 microfibril biogenesis. This Rattus norvegicus (Rat) protein is ADAMTS-like protein 4.